The following is a 715-amino-acid chain: Fatty acid oxidation complex subunit alpha (715 aa).

Positions 8-197 are enoyl-CoA hydratase; the sequence is NSQPSAFSLT…NLGLVEEAVP (190 aa). Positions 313–715 are 3-hydroxyacyl-CoA dehydrogenase; that stretch reads ATIKKVGVLG…MANEEQSFYS (403 aa).

This sequence in the N-terminal section; belongs to the enoyl-CoA hydratase/isomerase family. In the central section; belongs to the 3-hydroxyacyl-CoA dehydrogenase family. As to quaternary structure, heterotetramer of two alpha chains (FadJ) and two beta chains (FadI).

It is found in the cytoplasm. The catalysed reaction is a (3S)-3-hydroxyacyl-CoA = a (2E)-enoyl-CoA + H2O. It catalyses the reaction a 4-saturated-(3S)-3-hydroxyacyl-CoA = a (3E)-enoyl-CoA + H2O. It carries out the reaction a (3S)-3-hydroxyacyl-CoA + NAD(+) = a 3-oxoacyl-CoA + NADH + H(+). The enzyme catalyses (3S)-3-hydroxybutanoyl-CoA = (3R)-3-hydroxybutanoyl-CoA. It participates in lipid metabolism; fatty acid beta-oxidation. Functionally, catalyzes the formation of a hydroxyacyl-CoA by addition of water on enoyl-CoA. Also exhibits 3-hydroxyacyl-CoA epimerase and 3-hydroxyacyl-CoA dehydrogenase activities. The polypeptide is Fatty acid oxidation complex subunit alpha (Photobacterium profundum (strain SS9)).